Here is a 361-residue protein sequence, read N- to C-terminus: Diacylglycerol O-acyltransferase 2 (361 aa).

Over 1–42 (MKTILAAYSGVKKGSGSSILSALHDLPTVPWLTRSKMVKHLQ) the chain is Cytoplasmic. A helical transmembrane segment spans residues 43-61 (VISVLQFIMTFLTMGIACS). Residues 62-65 (LLLM) lie on the Lumenal side of the membrane. A helical transmembrane segment spans residues 66-85 (YMFCTDFWVISVLYVAWLIY). The Cytoplasmic segment spans residues 86–361 (DWNTPGQGGR…LNESDTLIIH (276 aa)).

It belongs to the diacylglycerol acyltransferase family.

It is found in the endoplasmic reticulum membrane. It localises to the lipid droplet. The protein resides in the cytoplasm. The protein localises to the perinuclear region. The catalysed reaction is an acyl-CoA + a 1,2-diacyl-sn-glycerol = a triacyl-sn-glycerol + CoA. The enzyme catalyses all-trans-retinol + an acyl-CoA = an all-trans-retinyl ester + CoA. It catalyses the reaction 2-(9Z-octadecenoyl)-glycerol + (9Z)-octadecenoyl-CoA = 1,2-di-(9Z-octadecenoyl)-sn-glycerol + CoA. It carries out the reaction 1,2-di-(9Z-octadecenoyl)-sn-glycerol + (9Z)-octadecenoyl-CoA = 1,2,3-tri-(9Z-octadecenoyl)-glycerol + CoA. The catalysed reaction is all-trans-retinol + hexadecanoyl-CoA = all-trans-retinyl hexadecanoate + CoA. The enzyme catalyses 1-O-(9Z-octadecenyl)-glycerol + (9Z)-octadecenoyl-CoA = 1-O-(9Z-octadecyl)-3-(9Z-octadecenoyl)-glycerol + CoA. It catalyses the reaction 1-(9Z-octadecenoyl)-glycerol + (9Z)-octadecenoyl-CoA = 1,2-di-(9Z-octadecenoyl)-glycerol + CoA. It carries out the reaction 1,2-di-(9Z-octadecenoyl)-sn-glycerol + hexadecanoyl-CoA = 1,2-di-(9Z)-octadecenoyl-3-hexadecanoyl-sn-glycerol + CoA. The catalysed reaction is 1,3-di-(9Z-octadecenoyl)-glycerol + (9Z)-octadecenoyl-CoA = 1,2,3-tri-(9Z-octadecenoyl)-glycerol + CoA. The enzyme catalyses 2,3-di-(9Z)-octadecenoyl-sn-glycerol + (9Z)-octadecenoyl-CoA = 1,2,3-tri-(9Z-octadecenoyl)-glycerol + CoA. It catalyses the reaction 2-(9Z-octadecenoyl)-glycerol + hexadecanoyl-CoA = 1-hexadecanoyl-2-(9Z-octadecenoyl)-sn-glycerol + CoA. It participates in glycerolipid metabolism; triacylglycerol biosynthesis. In terms of biological role, essential acyltransferase that catalyzes the terminal and only committed step in triacylglycerol synthesis by using diacylglycerol and fatty acyl CoA as substrates. Required for synthesis and storage of intracellular triglycerides. Probably plays a central role in cytosolic lipid accumulation. The chain is Diacylglycerol O-acyltransferase 2 (dgat2) from Danio rerio (Zebrafish).